A 352-amino-acid polypeptide reads, in one-letter code: Phosphoribosylformylglycinamidine cyclo-ligase (352 aa).

This sequence belongs to the AIR synthase family.

The protein localises to the cytoplasm. It catalyses the reaction 2-formamido-N(1)-(5-O-phospho-beta-D-ribosyl)acetamidine + ATP = 5-amino-1-(5-phospho-beta-D-ribosyl)imidazole + ADP + phosphate + H(+). The protein operates within purine metabolism; IMP biosynthesis via de novo pathway; 5-amino-1-(5-phospho-D-ribosyl)imidazole from N(2)-formyl-N(1)-(5-phospho-D-ribosyl)glycinamide: step 2/2. The protein is Phosphoribosylformylglycinamidine cyclo-ligase of Pseudomonas fluorescens (strain ATCC BAA-477 / NRRL B-23932 / Pf-5).